We begin with the raw amino-acid sequence, 309 residues long: Glutaminase (309 aa).

Substrate-binding residues include serine 65, asparagine 117, glutamate 162, asparagine 169, tyrosine 193, tyrosine 245, and valine 263.

It belongs to the glutaminase family. Homotetramer.

It carries out the reaction L-glutamine + H2O = L-glutamate + NH4(+). In Bacillus mycoides (strain KBAB4) (Bacillus weihenstephanensis), this protein is Glutaminase.